Reading from the N-terminus, the 327-residue chain is Aquaporin-1 (327 aa).

The segment at 1 to 34 is disordered; it reads MSSNDSNDTDKQHTRLDPTGVDDAYIPPEQPETK. The Cytoplasmic segment spans residues 1 to 48; it reads MSSNDSNDTDKQHTRLDPTGVDDAYIPPEQPETKHHRFKISRDTLRNH. A helical transmembrane segment spans residues 49–69; it reads FIAAVGEFCGTFMFLWCAYVI. Residues 70-91 lie on the Extracellular side of the membrane; sequence CNVANHDVALVAAPDGSHPGQL. Residues 92-112 form a helical membrane-spanning segment; it reads IMIAIGFGFSVMFSIWCFAGV. At 113 to 136 the chain is on the cytoplasmic side; it reads SGGALNPAVSLSLCLARAVSPTRC. An NPA 1 motif is present at residues 118-120; sequence NPA. Residues 137–157 traverse the membrane as a helical segment; the sequence is VVMWVSQIVAGMAAGGAASAM. Over 158–176 the chain is Extracellular; sequence TPGEVLFANSLGLGCSRTR. The helical transmembrane segment at 177–197 threads the bilayer; the sequence is GLFLEMFGTAILCLTVLMTAV. At 198–203 the chain is on the cytoplasmic side; the sequence is EKRETN. Residues 204-224 form a helical membrane-spanning segment; that stretch reads FMAALPIGISLFIAHVALTAY. The Extracellular segment spans residues 225 to 248; sequence TGTGVNPARSLGAAVAARYFPHYH. The NPA 2 signature appears at 230–232; sequence NPA. Residues 249-269 form a helical membrane-spanning segment; the sequence is WIYWIGPLLGSILAWSVWQLL. The Cytoplasmic segment spans residues 270 to 327; that stretch reads QILDYTTYVTAEKAASTKEKAQKKVKPAVPLLWLKSNFPLLFFISRSLALNVIIFGKN.

It belongs to the MIP/aquaporin (TC 1.A.8) family.

Its subcellular location is the endoplasmic reticulum membrane. The protein localises to the cell membrane. Its function is as follows. Water channel required to facilitate the transport of water across membranes. Involved in sporulation, freeze tolerance and osmotolerance. Is non-functional in most laboratory strains. In Saccharomyces cerevisiae (Baker's yeast), this protein is Aquaporin-1 (AQY1).